The sequence spans 38 residues: SFGLCRLRRGFCARGRCRFPSIPIGRCSRFVQCCRRVW.

3 disulfides stabilise this stretch: Cys5–Cys33, Cys12–Cys27, and Cys17–Cys34.

As to quaternary structure, monomer. In terms of tissue distribution, secreted into the stomach cavity.

It is found in the secreted. In terms of biological role, has antifungal activity and antibacterial activity against Gram-positive and Gram-negative bacteria. Involved in the process of food preservation in the stomach during the incubation fast. May also be present during infection. In Aptenodytes patagonicus (King penguin), this protein is Spheniscin-2.